The chain runs to 356 residues: Dual-specificity RNA methyltransferase RlmN (356 aa).

The active-site Proton acceptor is the Glu-87. The 234-residue stretch at 106–339 (QEAKYTICVS…CTIRDSKGID (234 aa)) folds into the Radical SAM core domain. Cys-113 and Cys-344 are joined by a disulfide. Residues Cys-120, Cys-124, and Cys-127 each contribute to the [4Fe-4S] cluster site. S-adenosyl-L-methionine contacts are provided by residues 170–171 (GE), Ser-202, 225–227 (SLH), and Asn-301. Catalysis depends on Cys-344, which acts as the S-methylcysteine intermediate.

Belongs to the radical SAM superfamily. RlmN family. Requires [4Fe-4S] cluster as cofactor.

It is found in the cytoplasm. The enzyme catalyses adenosine(2503) in 23S rRNA + 2 reduced [2Fe-2S]-[ferredoxin] + 2 S-adenosyl-L-methionine = 2-methyladenosine(2503) in 23S rRNA + 5'-deoxyadenosine + L-methionine + 2 oxidized [2Fe-2S]-[ferredoxin] + S-adenosyl-L-homocysteine. The catalysed reaction is adenosine(37) in tRNA + 2 reduced [2Fe-2S]-[ferredoxin] + 2 S-adenosyl-L-methionine = 2-methyladenosine(37) in tRNA + 5'-deoxyadenosine + L-methionine + 2 oxidized [2Fe-2S]-[ferredoxin] + S-adenosyl-L-homocysteine. Functionally, specifically methylates position 2 of adenine 2503 in 23S rRNA and position 2 of adenine 37 in tRNAs. m2A2503 modification seems to play a crucial role in the proofreading step occurring at the peptidyl transferase center and thus would serve to optimize ribosomal fidelity. In Sulfurimonas denitrificans (strain ATCC 33889 / DSM 1251) (Thiomicrospira denitrificans (strain ATCC 33889 / DSM 1251)), this protein is Dual-specificity RNA methyltransferase RlmN.